Here is a 400-residue protein sequence, read N- to C-terminus: S-adenosylmethionine synthase (400 aa).

Residue 136–141 (GTGSTD) coordinates ATP.

The protein belongs to the AdoMet synthase 2 family. Mg(2+) is required as a cofactor.

It carries out the reaction L-methionine + ATP + H2O = S-adenosyl-L-methionine + phosphate + diphosphate. It participates in amino-acid biosynthesis; S-adenosyl-L-methionine biosynthesis; S-adenosyl-L-methionine from L-methionine: step 1/1. In terms of biological role, catalyzes the formation of S-adenosylmethionine from methionine and ATP. The protein is S-adenosylmethionine synthase of Methanospirillum hungatei JF-1 (strain ATCC 27890 / DSM 864 / NBRC 100397 / JF-1).